A 711-amino-acid polypeptide reads, in one-letter code: Long-chain-fatty-acid--CoA ligase 4 (711 aa).

Residues 8–28 form a helical; Signal-anchor for type III membrane protein membrane-spanning segment; sequence LTIVLLPVHLLITIYSALIFI. Over 29–711 the chain is Cytoplasmic; sequence PWYFLTNAKK…KDIERMYGGK (683 aa). Ser-447 is modified (phosphoserine).

This sequence belongs to the ATP-dependent AMP-binding enzyme family. The cofactor is Mg(2+).

It is found in the mitochondrion outer membrane. It localises to the peroxisome membrane. Its subcellular location is the microsome membrane. The protein localises to the endoplasmic reticulum membrane. The protein resides in the cell membrane. It carries out the reaction a long-chain fatty acid + ATP + CoA = a long-chain fatty acyl-CoA + AMP + diphosphate. The enzyme catalyses (5Z,8Z,11Z,14Z)-eicosatetraenoate + ATP + CoA = (5Z,8Z,11Z,14Z)-eicosatetraenoyl-CoA + AMP + diphosphate. It catalyses the reaction 15-hydroxy-(5Z,8Z,11Z,13E)-eicosatetraenoate + ATP + CoA = 15-hydroxy-(5Z,8Z,11Z,13E)-eicosatetraenoyl-CoA + AMP + diphosphate. The catalysed reaction is 12-hydroxy-(5Z,8Z,10E,14Z)-eicosatetraenoate + ATP + CoA = 12-hydroxy-(5Z,8Z,10E,14Z)-eicosatetraenoyl-CoA + AMP + diphosphate. It carries out the reaction 5-hydroxy-(6E,8Z,11Z,14Z)-eicosatetraenoate + ATP + CoA = 5-hydroxy-(6E,8Z,11Z,14Z)-eicosatetraenoyl-CoA + AMP + diphosphate. The enzyme catalyses 5,6-epoxy-(8Z,11Z,14Z)-eicosatrienoate + ATP + CoA = 5,6-epoxy-(8Z,11Z,14Z)-eicosatrienoyl-CoA + AMP + diphosphate. It catalyses the reaction 14,15-epoxy-(5Z,8Z,11Z)-eicosatrienoate + ATP + CoA = 14,15-epoxy-(5Z,8Z,11Z)-eicosatrienoyl-CoA + AMP + diphosphate. The catalysed reaction is 11,12-epoxy-(5Z,8Z,14Z)-eicosatrienoate + ATP + CoA = 11,12-epoxy-(5Z,8Z,14Z)-eicosatrienoyl-CoA + AMP + diphosphate. It carries out the reaction 8,9-epoxy-(5Z,11Z,14Z)-eicosatrienoate + ATP + CoA = 8,9-epoxy-(5Z,11Z,14Z)-eicosatrienoyl-CoA + AMP + diphosphate. The enzyme catalyses hexadecanoate + ATP + CoA = hexadecanoyl-CoA + AMP + diphosphate. It catalyses the reaction (E)-hexadec-2-enoate + ATP + CoA = (2E)-hexadecenoyl-CoA + AMP + diphosphate. With respect to regulation, both triacsin C and rosiglitazone inhibit arachidonoyl-CoA ligase activity. Its function is as follows. Catalyzes the conversion of long-chain fatty acids to their active form acyl-CoA for both synthesis of cellular lipids, and degradation via beta-oxidation. Preferentially activates arachidonate and eicosapentaenoate as substrates. Preferentially activates 8,9-EET &gt; 14,15-EET &gt; 5,6-EET &gt; 11,12-EET. Modulates glucose-stimulated insulin secretion by regulating the levels of unesterified EETs. Modulates prostaglandin E2 secretion. This is Long-chain-fatty-acid--CoA ligase 4 (Acsl4) from Rattus norvegicus (Rat).